We begin with the raw amino-acid sequence, 286 residues long: Merozoite surface protein 2 (286 aa).

The first 20 residues, 1 to 20 (MKVIKTLSIINFFIFVTFNI), serve as a signal peptide directing secretion. Residues Asn-22 and Asn-36 are each glycosylated (N-linked (GlcNAc...) asparagine). Positions 43–248 (MTESKTPTPT…SQKECTDGNK (206 aa)) are disordered. The tract at residues 44–212 (TESKTPTPTG…EQTESPELQS (169 aa)) is polymorphic region. A compositionally biased stretch (gly residues) spans 54–68 (AGAGASGSAGSGDGA). The stretch at 59–68 (SGSAGSGDGA) is repeat 1. The interval 59–106 (SGSAGSGDGASGSASGSASGSASGSAGASGSASGSAGASGSASGSAGA) is 5 X 10 AA tandem repeats of S-G-S-A-[GS]-[GS]-[AD]-G-A. Residues 69–76 (SGSASGSA) form a 2; partial repeat. Over residues 69 to 137 (SGSASGSASG…STSTSSENPN (69 aa)) the composition is skewed to low complexity. Tandem repeats lie at residues 77-86 (SGSASGSAGA), 88-96 (GSASGSAGA), and 97-106 (SGSASGSAGA). Composition is skewed to polar residues over residues 153-179 (KPNQ…NVPP) and 186-214 (KSPT…QSAP). An N-linked (GlcNAc...) asparagine glycan is attached at Asn-163. Asn-235 carries an N-linked (GlcNAc...) asparagine glycan. Residues 239–248 (SQKECTDGNK) are compositionally biased toward basic and acidic residues. The cysteines at positions 243 and 251 are disulfide-linked. Asn-259 and Asn-260 each carry an N-linked (GlcNAc...) asparagine glycan. A lipid anchor (GPI-anchor amidated asparagine) is attached at Asn-260. A propeptide spans 261 to 286 (SSNIASINKFVVLISATLVLSFAIFI) (removed in mature form).

Its subcellular location is the cell membrane. Its function is as follows. May play a role in the merozoite attachment to the erythrocyte. This is Merozoite surface protein 2 from Plasmodium falciparum (isolate 311).